The sequence spans 360 residues: MIPRRSCWLILLLNLLNVQSLLDASWWSTVAQLSTALAGHNVKPVCELPGLSPGQAQVCELFKDHMPAVSIGAQNAIQECQRQFTGHRWNCSTHYSTGMLGPIHKMATREAAFTYAILSAGVTHEIGRRCKQGLLTSCGCSDETKPKNVPTDWSWGGCGDNVEYGYKFSRDFIDIREKEHDPKRNHDNGRSLMNRRNNEAGRKILKRHRKPKCKCHGVSGACNMKTCWMQLPSMEQVGKILRNKYDKAIRVQINDRGNLQLLADEATKERKTRALPTDLVFMDDSPDYCRFDRHSGTLGTEGRVCKRGSGGAEGCDSLCCGRGYNTYTQEVKSKCNCKFEWCCKVVCQTCNNVTQVDICK.

The N-terminal stretch at 1-37 (MIPRRSCWLILLLNLLNVQSLLDASWWSTVAQLSTAL) is a signal peptide. Cystine bridges form between cysteine 80/cysteine 91, cysteine 130/cysteine 138, cysteine 140/cysteine 158, cysteine 213/cysteine 227, cysteine 215/cysteine 222, cysteine 289/cysteine 320, cysteine 305/cysteine 315, cysteine 319/cysteine 359, cysteine 335/cysteine 350, cysteine 337/cysteine 347, and cysteine 342/cysteine 343. Asparagine 90 is a glycosylation site (N-linked (GlcNAc...) asparagine). Serine 219 carries the O-palmitoleoyl serine; by mom-1 lipid modification. Asparagine 352 carries an N-linked (GlcNAc...) asparagine glycan.

Belongs to the Wnt family. In terms of processing, palmitoleoylation is required for efficient binding to frizzled receptors. Depalmitoleoylation leads to Wnt signaling pathway inhibition. In terms of tissue distribution, expressed in intestine, pharynx, anterior body wall muscle, vulva, some pharyngeal neurons and SMD head neurons. Expressed along the boundary between the intestine and muscle or hypodermis, but is also expressed in the hypodermis in cells including seam cells.

The protein localises to the secreted. The protein resides in the extracellular space. Its subcellular location is the extracellular matrix. Functionally, ligand for members of the frizzled family of seven transmembrane receptors. Probable developmental protein. May be a signaling molecule which affects the development of discrete regions of tissues. Is likely to signal over only few cell diameters. Involved in the correct positioning of the developing nerve ring and in axon guidance of SIA and SIB neurons, probably by binding to tyrosine kinase receptor cam-1. In addition, regulates the positioning of some head neuronal cells, muscle arms associated with the nerve ring and the excretory pore. Together with Wnt ligand cwn-1, regulates the migration of CAN, ALM, BDU and HSN neurons during embryogenesis, the migration of QL and QR neuroblast descendants during larval development, and polarity of ALM neurons. May act through the wnt receptor cfz-2 to regulate QR neuroblast descendant migration, and to direct ALM migration. Also plays a role in axon growth and guidance in HSN and male CP neurons. In addition, together with wnt ligand cwn-1, negatively regulates developmental neurite pruning of AIM neurons probably by acting as a ligand for receptor tyrosine kinase cam-1. Through the cam-1 receptor also probably regulates the outgrowth of neurites from RME GABAergic motor neurons. May act redundantly with other Wnt ligands such as cwn-1 and mom-2 to control seam cell polarity. This chain is Protein Wnt-2, found in Caenorhabditis elegans.